A 155-amino-acid chain; its full sequence is 3-hydroxyacyl-[acyl-carrier-protein] dehydratase FabZ (155 aa).

The active site involves histidine 59.

Belongs to the thioester dehydratase family. FabZ subfamily.

It localises to the cytoplasm. It catalyses the reaction a (3R)-hydroxyacyl-[ACP] = a (2E)-enoyl-[ACP] + H2O. Involved in unsaturated fatty acids biosynthesis. Catalyzes the dehydration of short chain beta-hydroxyacyl-ACPs and long chain saturated and unsaturated beta-hydroxyacyl-ACPs. The sequence is that of 3-hydroxyacyl-[acyl-carrier-protein] dehydratase FabZ from Bartonella henselae (strain ATCC 49882 / DSM 28221 / CCUG 30454 / Houston 1) (Rochalimaea henselae).